The following is a 141-amino-acid chain: uncharacterized protein (141 aa).

This is an uncharacterized protein from Caenorhabditis elegans.